Consider the following 704-residue polypeptide: MLKLFSAFRKDKIWDFDGGIHPPEMKTQSNGTPLRQVPLAPRFVIPLKQHIGAEGELCVSVGDRVLRGQALTRGRGRMLPVHAPTSGTVIAIAPHSTAHPSALAELSVIIDADGEDRWIEREGWSDYRAHSREALIERIHQYGVAGLGGAGFPTGVKLQGGGDKITTLIINAAECEPYITADDRLMQDCAAQIVEGIRILAHILQPREVLIGIEDNKPQAISMLRAVLADAHDISLRVIPTKYPSGGAKQLTQILTGKQVPHGGRSSDIGVLMQNVGTAYAVKRAVVDGEPITERVVTLTGEAVSRPGNVWARLGTPVRHLLNDAGFCPSADQMVIMGGPLMGFTLPWLDVPVVKITNCLLAPSVAEMGAPQEEKSCIRCSACADACPADLLPQQLYWFSKGQQHDKATAHHIADCIECGACAWVCPSNIPLVQYFRQEKAEINAIRLEEKRAAEAKARFEARQARLEREKAARLARHKSAAVQPAAKDQDAIAAALARVKEKQAQATQPVVIQAGSQPDNSAVIAAREARKAQARAKQAAHPMADSAIPGDDPSKAAVEAAIARAKARKQEQQAGSEPVEAVDPRKAAVEAAIARAKARKQEQQTGSEPAEPIDPRKAAVEAAIARAKARKQEQQTGSEPAEPIDPRKAAVEAAIARAKARKQEQQAGSEPAEPADPRKAAVAAAIARVQAKKAAQQQVVNED.

2 4Fe-4S ferredoxin-type domains span residues 368–397 (MGAPQEEKSCIRCSACADACPADLLPQQLY) and 407–436 (KATAHHIADCIECGACAWVCPSNIPLVQYF). The [4Fe-4S] cluster site is built by C377, C380, C383, C387, C416, C419, C422, and C426. Positions 535–684 (ARAKQAAHPM…PADPRKAAVA (150 aa)) are disordered. Residues 556–565 (KAAVEAAIAR) are compositionally biased toward low complexity.

Belongs to the 4Fe4S bacterial-type ferredoxin family. RnfC subfamily. In terms of assembly, the complex is composed of six subunits: RsxA, RsxB, RsxC, RsxD, RsxE and RsxG. The cofactor is [4Fe-4S] cluster.

It localises to the cell inner membrane. Its function is as follows. Part of a membrane-bound complex that couples electron transfer with translocation of ions across the membrane. Required to maintain the reduced state of SoxR. This chain is Ion-translocating oxidoreductase complex subunit C, found in Salmonella paratyphi C (strain RKS4594).